The primary structure comprises 435 residues: Pregnancy-specific beta-1-glycoprotein 6 (435 aa).

A signal peptide spans Met-1–Ala-34. An Ig-like V-type domain is found at Gln-35 to Ser-143. 3 N-linked (GlcNAc...) asparagine glycosylation sites follow: Asn-61, Asn-103, and Asn-110. Residues Arg-126–Asp-128 carry the Cell attachment site motif. Ig-like C2-type domains lie at Pro-148 to Asn-233, Pro-241 to Asn-326, and Pro-334 to Ser-405. 3 disulfides stabilise this stretch: Cys-168–Cys-216, Cys-261–Cys-309, and Cys-353–Cys-393. Residues Asn-198, Asn-267, Asn-302, and Asn-386 are each glycosylated (N-linked (GlcNAc...) asparagine).

It belongs to the immunoglobulin superfamily. CEA family.

It is found in the secreted. The chain is Pregnancy-specific beta-1-glycoprotein 6 (PSG6) from Homo sapiens (Human).